We begin with the raw amino-acid sequence, 256 residues long: Probable aquaporin TIP-type alpha (256 aa).

The Cytoplasmic portion of the chain corresponds to Met1–Leu24. At Ser7 the chain carries Phosphoserine; by CPK. Residues Ala25–Leu44 form a helical membrane-spanning segment. The Vacuolar segment spans residues Val45–Glu57. A helical membrane pass occupies residues Leu58 to Met77. The Cytoplasmic segment spans residues His78–Arg102. The NPA 1 signature appears at Asn85–Ala87. The helical transmembrane segment at Ala103 to Leu121 threads the bilayer. Over Arg122–His143 the chain is Vacuolar. Residues Met144–Ile164 traverse the membrane as a helical segment. At Asp165 to Gly169 the chain is on the cytoplasmic side. The chain crosses the membrane as a helical span at residues Ala170–Val189. At Gly190–His216 the chain is on the vacuolar side. The NPA 2 motif lies at Asn199 to Ala201. A helical membrane pass occupies residues Trp217–Ile239. The Cytoplasmic portion of the chain corresponds to Pro240–Tyr256.

This sequence belongs to the MIP/aquaporin (TC 1.A.8) family. TIP (TC 1.A.8.10) subfamily. Phosphorylated by a tonoplast-bound calcium-dependent protein kinase. In terms of tissue distribution, found in all seed tissues that are alive at seed maturity, but not in tissues that lose viability during seed maturation.

The protein resides in the vacuole membrane. In terms of biological role, channel protein in tonoplast. These proteins may allow the diffusion of amino acids and/or peptides from the vacuolar compartment to the cytoplasm. This is Probable aquaporin TIP-type alpha from Phaseolus vulgaris (Kidney bean).